Reading from the N-terminus, the 295-residue chain is Aspartate carbamoyltransferase catalytic subunit (295 aa).

2 residues coordinate carbamoyl phosphate: arginine 49 and threonine 50. Residue lysine 77 coordinates L-aspartate. 3 residues coordinate carbamoyl phosphate: arginine 99, histidine 127, and glutamine 130. 2 residues coordinate L-aspartate: arginine 161 and arginine 212. Carbamoyl phosphate-binding residues include glycine 251 and proline 252.

Belongs to the aspartate/ornithine carbamoyltransferase superfamily. ATCase family. Heterododecamer (2C3:3R2) of six catalytic PyrB chains organized as two trimers (C3), and six regulatory PyrI chains organized as three dimers (R2).

It carries out the reaction carbamoyl phosphate + L-aspartate = N-carbamoyl-L-aspartate + phosphate + H(+). Its pathway is pyrimidine metabolism; UMP biosynthesis via de novo pathway; (S)-dihydroorotate from bicarbonate: step 2/3. Catalyzes the condensation of carbamoyl phosphate and aspartate to form carbamoyl aspartate and inorganic phosphate, the committed step in the de novo pyrimidine nucleotide biosynthesis pathway. In Campylobacter jejuni subsp. doylei (strain ATCC BAA-1458 / RM4099 / 269.97), this protein is Aspartate carbamoyltransferase catalytic subunit.